The chain runs to 105 residues: uncharacterized protein (105 aa).

This is an uncharacterized protein from Bacillus subtilis (strain 168).